The primary structure comprises 282 residues: Light-independent protochlorophyllide reductase iron-sulfur ATP-binding protein (282 aa).

Residues 10–15 (GIGKST) and Lys39 each bind ATP. Ser14 serves as a coordination point for Mg(2+). Residues Cys95 and Cys129 each contribute to the [4Fe-4S] cluster site. An ATP-binding site is contributed by 180-181 (NR).

Belongs to the NifH/BchL/ChlL family. In terms of assembly, homodimer. Protochlorophyllide reductase is composed of three subunits; ChlL, ChlN and ChlB. [4Fe-4S] cluster is required as a cofactor.

The protein resides in the plastid. The protein localises to the cyanelle. It carries out the reaction chlorophyllide a + oxidized 2[4Fe-4S]-[ferredoxin] + 2 ADP + 2 phosphate = protochlorophyllide a + reduced 2[4Fe-4S]-[ferredoxin] + 2 ATP + 2 H2O. It functions in the pathway porphyrin-containing compound metabolism; chlorophyll biosynthesis (light-independent). Its function is as follows. Component of the dark-operative protochlorophyllide reductase (DPOR) that uses Mg-ATP and reduced ferredoxin to reduce ring D of protochlorophyllide (Pchlide) to form chlorophyllide a (Chlide). This reaction is light-independent. The L component serves as a unique electron donor to the NB-component of the complex, and binds Mg-ATP. The chain is Light-independent protochlorophyllide reductase iron-sulfur ATP-binding protein from Cyanophora paradoxa.